The chain runs to 109 residues: Thiosulfate sulfurtransferase GlpE (109 aa).

The region spanning 17–105 is the Rhodanese domain; it reads KEGKTALVDI…WARSYPQDIT (89 aa). Residue cysteine 65 is the Cysteine persulfide intermediate of the active site.

The protein belongs to the GlpE family.

The protein resides in the cytoplasm. It carries out the reaction thiosulfate + hydrogen cyanide = thiocyanate + sulfite + 2 H(+). The catalysed reaction is thiosulfate + [thioredoxin]-dithiol = [thioredoxin]-disulfide + hydrogen sulfide + sulfite + 2 H(+). Functionally, transferase that catalyzes the transfer of sulfur from thiosulfate to thiophilic acceptors such as cyanide or dithiols. May function in a CysM-independent thiosulfate assimilation pathway by catalyzing the conversion of thiosulfate to sulfite, which can then be used for L-cysteine biosynthesis. In Yersinia pestis bv. Antiqua (strain Antiqua), this protein is Thiosulfate sulfurtransferase GlpE.